The chain runs to 98 residues: Small ribosomal subunit protein bS6 (98 aa).

The protein belongs to the bacterial ribosomal protein bS6 family.

Functionally, binds together with bS18 to 16S ribosomal RNA. The protein is Small ribosomal subunit protein bS6 of Lacticaseibacillus paracasei (strain ATCC 334 / BCRC 17002 / CCUG 31169 / CIP 107868 / KCTC 3260 / NRRL B-441) (Lactobacillus paracasei).